The primary structure comprises 449 residues: Glucose-6-phosphate isomerase (449 aa).

The active-site Proton donor is Glu-291. Residues His-312 and Lys-426 contribute to the active site.

Belongs to the GPI family.

It is found in the cytoplasm. The catalysed reaction is alpha-D-glucose 6-phosphate = beta-D-fructose 6-phosphate. Its pathway is carbohydrate biosynthesis; gluconeogenesis. The protein operates within carbohydrate degradation; glycolysis; D-glyceraldehyde 3-phosphate and glycerone phosphate from D-glucose: step 2/4. Its function is as follows. Catalyzes the reversible isomerization of glucose-6-phosphate to fructose-6-phosphate. In Streptococcus pyogenes serotype M18 (strain MGAS8232), this protein is Glucose-6-phosphate isomerase.